Consider the following 308-residue polypeptide: D-alanine--D-alanine ligase (308 aa).

One can recognise an ATP-grasp domain in the interval 105–302 (KAIFKALGLD…FPELCERILD (198 aa)). 133–188 (DLPFGVPCVVKPAGEGSSVGVQIVKDAARLADACREAARYKGDVVVERYVKGTEVN) contributes to the ATP binding site. Mg(2+) is bound by residues Asp256, Glu269, and Asn271.

It belongs to the D-alanine--D-alanine ligase family. The cofactor is Mg(2+). Mn(2+) is required as a cofactor.

Its subcellular location is the cytoplasm. The catalysed reaction is 2 D-alanine + ATP = D-alanyl-D-alanine + ADP + phosphate + H(+). It functions in the pathway cell wall biogenesis; peptidoglycan biosynthesis. In terms of biological role, cell wall formation. This Anaeromyxobacter sp. (strain Fw109-5) protein is D-alanine--D-alanine ligase.